Here is a 287-residue protein sequence, read N- to C-terminus: HTH-type transcriptional regulator MurR (287 aa).

An HTH rpiR-type domain is found at 1 to 77; it reads MLYLAKMRNA…MALIEEYSVN (77 aa). Residues 37-56 constitute a DNA-binding region (H-T-H motif); it reads SRNLAKQLEVSQSSIVKFAQ. The 141-residue stretch at 128 to 268 folds into the SIS domain; the sequence is VINLISKARL…FVGMVQLNDV (141 aa).

In terms of assembly, homotetramer.

The protein operates within amino-sugar metabolism; N-acetylmuramate degradation [regulation]. Represses the expression of the murPQ operon involved in the uptake and degradation of N-acetylmuramic acid (MurNAc). Binds to two adjacent inverted repeats within the operator region. MurNAc 6-phosphate, the substrate of MurQ, is the specific inducer that weakens binding of MurR to the operator. In Citrobacter koseri (strain ATCC BAA-895 / CDC 4225-83 / SGSC4696), this protein is HTH-type transcriptional regulator MurR.